A 370-amino-acid chain; its full sequence is MRRFFENVPENLWRSYEWQIQNRIKTLKEIKKYLKLLPEEEEGIKRTQGLYPFAITPYYLSLINPEDPKDPIRLQAIPRVVEVDEKVQSAGEPDALKEEGDIPGLTHRYPDRVLLNVTTFCAVYCRHCMRKRIFSQGERARTKEEIDTMIDYIKRHEEIRDVLISGGEPLSLSLEKLEYLLSRLREIKHVEIIRFGTRLPVLAPQRFFNDKLLDILEKYSPIWINTHFNHPNEITEYAEEAVDRLLRRGIPVNNQTVLLKGVNDDPEVMLKLFRKLLRIKVKPQYLFHCDPIKGAVHFRTTIDKGLEIMRYLRGRLSGFGIPTYAVDLPGGKGKVPLLPNYVKKRKGNKFWFESFTGEVVEYEVTEVWEP.

Residues 107–322 (HRYPDRVLLN…RGRLSGFGIP (216 aa)) enclose the Radical SAM core domain. Residues Cys121, Cys125, and Cys128 each coordinate [4Fe-4S] cluster. Lys334 is subject to N6-(pyridoxal phosphate)lysine.

Belongs to the radical SAM superfamily. KamA family. It depends on [4Fe-4S] cluster as a cofactor. Pyridoxal 5'-phosphate is required as a cofactor.

In Aquifex aeolicus (strain VF5), this protein is Putative L-lysine 2,3-aminomutase aq_454.